Consider the following 122-residue polypeptide: UPF0102 protein CLL_A1253 (122 aa).

It belongs to the UPF0102 family.

The chain is UPF0102 protein CLL_A1253 from Clostridium botulinum (strain Eklund 17B / Type B).